The primary structure comprises 279 residues: 3-methyl-2-oxobutanoate hydroxymethyltransferase (279 aa).

Residues aspartate 44 and aspartate 83 each coordinate Mg(2+). Residues 44–45 (DS), aspartate 83, and lysine 113 contribute to the 3-methyl-2-oxobutanoate site. Mg(2+) is bound at residue glutamate 115. Glutamate 182 (proton acceptor) is an active-site residue.

Belongs to the PanB family. Homodecamer; pentamer of dimers. Mg(2+) is required as a cofactor.

The protein resides in the cytoplasm. The catalysed reaction is 3-methyl-2-oxobutanoate + (6R)-5,10-methylene-5,6,7,8-tetrahydrofolate + H2O = 2-dehydropantoate + (6S)-5,6,7,8-tetrahydrofolate. Its pathway is cofactor biosynthesis; (R)-pantothenate biosynthesis; (R)-pantoate from 3-methyl-2-oxobutanoate: step 1/2. Its function is as follows. Catalyzes the reversible reaction in which hydroxymethyl group from 5,10-methylenetetrahydrofolate is transferred onto alpha-ketoisovalerate to form ketopantoate. In Desulfotalea psychrophila (strain LSv54 / DSM 12343), this protein is 3-methyl-2-oxobutanoate hydroxymethyltransferase.